The sequence spans 428 residues: Threonine synthase (428 aa).

Lys107 is subject to N6-(pyridoxal phosphate)lysine.

The protein belongs to the threonine synthase family. Requires pyridoxal 5'-phosphate as cofactor.

The enzyme catalyses O-phospho-L-homoserine + H2O = L-threonine + phosphate. Its pathway is amino-acid biosynthesis; L-threonine biosynthesis; L-threonine from L-aspartate: step 5/5. Is competitively inhibited by L-threo-3-hydroxyhomoserine phosphate. Functionally, catalyzes the gamma-elimination of phosphate from L-phosphohomoserine and the beta-addition of water to produce L-threonine. To a lesser extent, is able to slowly catalyze the deamination of L-threonine into alpha-ketobutyrate and that of L-serine and 3-chloroalanine into pyruvate. Is also able to rapidly convert vinylglycine to threonine, which proves that the pyridoxal p-quinonoid of vinylglycine is an intermediate in the TS reaction. This Escherichia coli (strain K12) protein is Threonine synthase (thrC).